Reading from the N-terminus, the 553-residue chain is Rhodopsin kinase GRK7 (553 aa).

The residue at position 36 (serine 36) is a Phosphoserine; by PKA. Residues 56–176 (FHSLCEQQPI…VTSAFYDKFL (121 aa)) form the RGS domain. The Protein kinase domain occupies 191–454 (FTEFRVLGKG…SDDPRKHHFF (264 aa)). ATP contacts are provided by residues 197-205 (LGKGGFGEV) and lysine 220. Aspartate 316 acts as the Proton acceptor in catalysis. One can recognise an AGC-kinase C-terminal domain in the interval 455–520 (KTINFPRLEA…GAVPIAWQEE (66 aa)). Cysteine 550 carries the cysteine methyl ester modification. Cysteine 550 carries the S-geranylgeranyl cysteine lipid modification. The propeptide at 551-553 (LLL) is removed in mature form.

It belongs to the protein kinase superfamily. AGC Ser/Thr protein kinase family. GPRK subfamily. As to quaternary structure, interacts (when prenylated) with PDE6D; this promotes release from membranes. Post-translationally, autophosphorylated in vitro at Ser-490. Phosphorylation at Ser-36 is regulated by light and activated by cAMP. As to expression, retinal cones, outer and inner segments.

The protein resides in the membrane. The enzyme catalyses L-threonyl-[rhodopsin] + ATP = O-phospho-L-threonyl-[rhodopsin] + ADP + H(+). The catalysed reaction is L-seryl-[rhodopsin] + ATP = O-phospho-L-seryl-[rhodopsin] + ADP + H(+). With respect to regulation, inhibited by phosphorylation of Ser-36. Its function is as follows. Retina-specific kinase involved in the shutoff of the photoresponse and adaptation to changing light conditions via cone opsin phosphorylation, including rhodopsin (RHO). This is Rhodopsin kinase GRK7 (GRK7) from Homo sapiens (Human).